The sequence spans 192 residues: Probable molybdenum cofactor guanylyltransferase (192 aa).

GTP contacts are provided by residues 8–10 (LAG), lysine 20, aspartate 69, and aspartate 94. Aspartate 94 is a Mg(2+) binding site.

It belongs to the MobA family. The cofactor is Mg(2+).

Its subcellular location is the cytoplasm. The enzyme catalyses Mo-molybdopterin + GTP + H(+) = Mo-molybdopterin guanine dinucleotide + diphosphate. Its function is as follows. Transfers a GMP moiety from GTP to Mo-molybdopterin (Mo-MPT) cofactor (Moco or molybdenum cofactor) to form Mo-molybdopterin guanine dinucleotide (Mo-MGD) cofactor. The polypeptide is Probable molybdenum cofactor guanylyltransferase (Pyrococcus horikoshii (strain ATCC 700860 / DSM 12428 / JCM 9974 / NBRC 100139 / OT-3)).